A 267-amino-acid chain; its full sequence is Alkaline ceramidase 3 (267 aa).

Over 1-33 (MAPAVDRKGYWGPTTSTLDWCEENYVVTLFVAE) the chain is Cytoplasmic. 5 residues coordinate Ca(2+): Asp19, Trp20, Glu22, Asn24, and Glu33. The helical transmembrane segment at 34–55 (FWNTVSNLIMIIPPIFGAIQGI) threads the bilayer. Residues 56–61 (RDRLEK) lie on the Lumenal side of the membrane. Residues 62–82 (RYIAAYLALTVVGMGSWCFHM) form a helical membrane-spanning segment. Residue His81 participates in Zn(2+) binding. At 83–87 (TLKYE) the chain is on the cytoplasmic side. The helical transmembrane segment at 88 to 108 (MQLLDELPMIYSCCIFVYCMF) threads the bilayer. Over 109-118 (ECFKTKSSIN) the chain is Lumenal. A helical membrane pass occupies residues 119–139 (YHLLFTLFLYSLTVTTIYLKV). The Cytoplasmic portion of the chain corresponds to 140–141 (KE). Residues 142–162 (PIFHQVMYGMLVFTLVLRSIY) traverse the membrane as a helical segment. At 163-173 (IVTWVYPWLRG) the chain is on the lumenal side. The chain crosses the membrane as a helical span at residues 174–194 (LGYTSLTVFLLGFLLWNIDNI). The Cytoplasmic segment spans residues 195–215 (FCDSLRNFRKRVPPVLGVTTQ). The helical transmembrane segment at 216-236 (FHAWWHILTGLGSYLHILFSL) threads the bilayer. Positions 217 and 221 each coordinate Zn(2+). Over 237–267 (YTRTLYLRYRPKVKFLFGIWPAVMFEPQRKH) the chain is Lumenal.

This sequence belongs to the alkaline ceramidase family. It depends on Zn(2+) as a cofactor. In terms of tissue distribution, up-regulated with age in cerebeLlum and cerebrum.

Its subcellular location is the endoplasmic reticulum membrane. It is found in the golgi apparatus membrane. It catalyses the reaction an N-acyl-(4R)-4-hydroxysphinganine + H2O = (4R)-hydroxysphinganine + a fatty acid. The catalysed reaction is N-(5Z,8Z,11Z,14Z-eicosatetraenoyl)-sphing-4-enine + H2O = sphing-4-enine + (5Z,8Z,11Z,14Z)-eicosatetraenoate. The enzyme catalyses N-(5Z,8Z,11Z,14Z-eicosatetraenoyl)-sphinganine + H2O = sphinganine + (5Z,8Z,11Z,14Z)-eicosatetraenoate. It carries out the reaction N-(5Z,8Z,11Z,14Z-eicosatetraenoyl)-(4R)-hydroxysphinganine + H2O = (4R)-hydroxysphinganine + (5Z,8Z,11Z,14Z)-eicosatetraenoate. It catalyses the reaction N-(11Z-eicosenoyl)-sphing-4-enine + H2O = (11Z)-eicosenoate + sphing-4-enine. The catalysed reaction is N-(11Z-eicosenoyl)-sphinganine + H2O = (11Z)-eicosenoate + sphinganine. The enzyme catalyses N-(11Z-eicosenoyl)-(4R)-hydroxysphinganine + H2O = (11Z)-eicosenoate + (4R)-hydroxysphinganine. It carries out the reaction N-(9Z-octadecenoyl)-sphing-4-enine + H2O = sphing-4-enine + (9Z)-octadecenoate. It catalyses the reaction N-(9Z-octadecenoyl)-sphinganine + H2O = sphinganine + (9Z)-octadecenoate. The catalysed reaction is N-(9Z-octadecenoyl)-(4R)-hydroxysphinganine + H2O = (4R)-hydroxysphinganine + (9Z)-octadecenoate. The enzyme catalyses an N-acylsphing-4-enine + H2O = sphing-4-enine + a fatty acid. It carries out the reaction an N-acylsphinganine + H2O = sphinganine + a fatty acid. It functions in the pathway lipid metabolism; sphingolipid metabolism. With respect to regulation, activated by Ca(2+) and inhibited by Zn(2+). In terms of biological role, endoplasmic reticulum and Golgi ceramidase that catalyzes the hydrolysis of unsaturated long-chain C18:1-, C20:1- and C20:4-ceramides, dihydroceramides and phytoceramides into sphingoid bases like sphingosine and free fatty acids at alkaline pH. Ceramides, sphingosine, and its phosphorylated form sphingosine-1-phosphate are bioactive lipids that mediate cellular signaling pathways regulating several biological processes including cell proliferation, apoptosis and differentiation. Controls the generation of sphingosine in erythrocytes, and thereby sphingosine-1-phosphate in plasma. Through the regulation of ceramides and sphingosine-1-phosphate homeostasis in the brain may play a role in neurons survival and function. By regulating the levels of pro-inflammatory ceramides in immune cells and tissues, may modulate the inflammatory response. This chain is Alkaline ceramidase 3 (Acer3), found in Mus musculus (Mouse).